Here is a 431-residue protein sequence, read N- to C-terminus: Enolase (431 aa).

Position 163 (Gln163) interacts with (2R)-2-phosphoglycerate. Glu205 (proton donor) is an active-site residue. Mg(2+)-binding residues include Asp242, Glu288, and Asp315. Residues Lys340, Arg369, Ser370, and Lys391 each contribute to the (2R)-2-phosphoglycerate site. Residue Lys340 is the Proton acceptor of the active site.

This sequence belongs to the enolase family. The cofactor is Mg(2+).

The protein localises to the cytoplasm. Its subcellular location is the secreted. It localises to the cell surface. The enzyme catalyses (2R)-2-phosphoglycerate = phosphoenolpyruvate + H2O. The protein operates within carbohydrate degradation; glycolysis; pyruvate from D-glyceraldehyde 3-phosphate: step 4/5. In terms of biological role, catalyzes the reversible conversion of 2-phosphoglycerate (2-PG) into phosphoenolpyruvate (PEP). It is essential for the degradation of carbohydrates via glycolysis. The chain is Enolase from Bacillus cereus (strain G9842).